The sequence spans 388 residues: Flavin-dependent monooxygenase (388 aa).

FAD-binding positions include 12 to 15 (VGVA), 34 to 36 (EKS), 44 to 47 (QALD), arginine 105, tyrosine 267, aspartate 289, and 296 to 302 (PLSGQGN).

The protein belongs to the aromatic-ring hydroxylase family. FAD is required as a cofactor.

The enzyme catalyses a tetracycline + NADPH + O2 + H(+) = a (1S,10aS)-3-(CONH2)-1-(Me2N)-3,3a,4,6-(HO)4-2,5-dioxo-1H,10aH,11H,11aH-cyclopenta[b]anthracene + CO + NADP(+) + H2O. It carries out the reaction 7-chlorotetracycline + NADPH + O2 + H(+) = (1S,10S,10aS)-3-(CONH2)-9-Cl-1-(Me2N)-3,3a,4,10-(HO)4-10-Me-2,5-dioxo-1H,10aH,11H,11aH-cyclopenta[b]anthracen-6-olate + CO + NADP(+) + H2O. With respect to regulation, inhibited by anhydrotetracycline. An FAD-requiring monooxygenase active on tetracycline antibiotic and some of its derivatives, which leads to their inactivation. Expression in E.coli confers high resistance to tetracycline and oxytetracycline, does not confer resistance to minocycline or tigecycline. Degrades tetracycline and oxytetracycline; the reaction requires NADPH. Degrades and confers resistance to chlortetracycline. In Unknown prokaryotic organism, this protein is Flavin-dependent monooxygenase (tet(50)).